Here is a 241-residue protein sequence, read N- to C-terminus: 1-(5-phosphoribosyl)-5-[(5-phosphoribosylamino)methylideneamino] imidazole-4-carboxamide isomerase (241 aa).

Asp8 serves as the catalytic Proton acceptor. The active-site Proton donor is Asp129.

The protein belongs to the HisA/HisF family.

It localises to the cytoplasm. The catalysed reaction is 1-(5-phospho-beta-D-ribosyl)-5-[(5-phospho-beta-D-ribosylamino)methylideneamino]imidazole-4-carboxamide = 5-[(5-phospho-1-deoxy-D-ribulos-1-ylimino)methylamino]-1-(5-phospho-beta-D-ribosyl)imidazole-4-carboxamide. Its pathway is amino-acid biosynthesis; L-histidine biosynthesis; L-histidine from 5-phospho-alpha-D-ribose 1-diphosphate: step 4/9. In Novosphingobium aromaticivorans (strain ATCC 700278 / DSM 12444 / CCUG 56034 / CIP 105152 / NBRC 16084 / F199), this protein is 1-(5-phosphoribosyl)-5-[(5-phosphoribosylamino)methylideneamino] imidazole-4-carboxamide isomerase.